A 459-amino-acid chain; its full sequence is Mitochondrial distribution and morphology protein 34 (459 aa).

Positions 1-190 constitute an SMP-LTD domain; that stretch reads MSFRFNEAVF…LPSLIFNTSQ (190 aa). Residues 338–347 show a composition bias toward basic and acidic residues; it reads RSNSNDDNAK. The tract at residues 338 to 375 is disordered; it reads RSNSNDDNAKPRRRKIKCKKTRTPSNLQSQGEQAVDDS. Residues 348–359 are compositionally biased toward basic residues; sequence PRRRKIKCKKTR.

Belongs to the MDM34 family. In terms of assembly, component of the ER-mitochondria encounter structure (ERMES) or MDM complex, composed of MMM1, MDM10, MDM12 and MDM34. Post-translationally, ubiquitinated by a SCF (SKP1-CUL1-F-box protein) E3 ubiquitin-protein ligase complex containing the F-box protein MDM30. Ubiquitination is important for mitochondrial integrity.

The protein localises to the mitochondrion outer membrane. Its function is as follows. Component of the ERMES/MDM complex, which serves as a molecular tether to connect the endoplasmic reticulum (ER) and mitochondria. Components of this complex are involved in the control of mitochondrial shape and protein biogenesis, and function in nonvesicular lipid trafficking between the ER and mitochondria. MDM34 is required for the interaction of the ER-resident membrane protein MMM1 and the outer mitochondrial membrane-resident beta-barrel protein MDM10. This is Mitochondrial distribution and morphology protein 34 from Saccharomyces cerevisiae (strain AWRI1631) (Baker's yeast).